A 362-amino-acid polypeptide reads, in one-letter code: Phosphoserine aminotransferase (362 aa).

R43 is an L-glutamate binding site. Residues 77–78 (AR), W103, T153, D173, and Q196 contribute to the pyridoxal 5'-phosphate site. K197 carries the post-translational modification N6-(pyridoxal phosphate)lysine.

It belongs to the class-V pyridoxal-phosphate-dependent aminotransferase family. SerC subfamily. Homodimer. Pyridoxal 5'-phosphate is required as a cofactor.

It localises to the cytoplasm. The enzyme catalyses O-phospho-L-serine + 2-oxoglutarate = 3-phosphooxypyruvate + L-glutamate. The catalysed reaction is 4-(phosphooxy)-L-threonine + 2-oxoglutarate = (R)-3-hydroxy-2-oxo-4-phosphooxybutanoate + L-glutamate. Its pathway is amino-acid biosynthesis; L-serine biosynthesis; L-serine from 3-phospho-D-glycerate: step 2/3. It participates in cofactor biosynthesis; pyridoxine 5'-phosphate biosynthesis; pyridoxine 5'-phosphate from D-erythrose 4-phosphate: step 3/5. Functionally, catalyzes the reversible conversion of 3-phosphohydroxypyruvate to phosphoserine and of 3-hydroxy-2-oxo-4-phosphonooxybutanoate to phosphohydroxythreonine. This chain is Phosphoserine aminotransferase, found in Legionella pneumophila (strain Paris).